A 137-amino-acid chain; its full sequence is MLTISNNVHLPDAEIELTYIRAQGAGGQNVNKVSSAVHLRFDIPASSLPEFYKERLLALRDSRITGDGVLIIKAQQYRTQDQNRADALARLAELIIAAGKTEKKRRPTKPTLGSKTRRLEGKARRSTVKAGRGKVDF.

Residues 102–137 form a disordered region; that stretch reads EKKRRPTKPTLGSKTRRLEGKARRSTVKAGRGKVDF.

This sequence belongs to the prokaryotic/mitochondrial release factor family. As to quaternary structure, associated with 70S ribosomes and polysomes.

The protein resides in the cytoplasm. The catalysed reaction is an N-acyl-L-alpha-aminoacyl-tRNA + H2O = an N-acyl-L-amino acid + a tRNA + H(+). In terms of biological role, rescues stalled ribosomes. Can hydrolyze peptidyl-tRNA on ribosomes stalled by both non-stop mRNAs and mRNAs that contain rare codon clusters. The polypeptide is Peptidyl-tRNA hydrolase ArfB (arfB) (Pseudomonas putida (Arthrobacter siderocapsulatus)).